Reading from the N-terminus, the 231-residue chain is NADH-ubiquinone oxidoreductase chain 4 (231 aa).

The next 6 membrane-spanning stretches (helical) occupy residues 1 to 21 (PIAGSMVLAAILLKLGGYGII), 34 to 54 (MFLPFLVLALWGAILANLTCL), 63 to 85 (IAYSSISHMGLVVAAIIIQTPWG), 89 to 111 (AMALMIAHGFTSSALFCLANTTY), 118 to 138 (ILILTRGFHNILPMATTWWLL), and 169 to 189 (TIILLGMSMLITASYSLHMFL).

Belongs to the complex I subunit 4 family.

It localises to the mitochondrion membrane. It catalyses the reaction a ubiquinone + NADH + 5 H(+)(in) = a ubiquinol + NAD(+) + 4 H(+)(out). Core subunit of the mitochondrial membrane respiratory chain NADH dehydrogenase (Complex I) that is believed to belong to the minimal assembly required for catalysis. Complex I functions in the transfer of electrons from NADH to the respiratory chain. The immediate electron acceptor for the enzyme is believed to be ubiquinone. The sequence is that of NADH-ubiquinone oxidoreductase chain 4 (MT-ND4) from Trimeresurus cantori (Cantor's pit viper).